Reading from the N-terminus, the 345-residue chain is 4-hydroxyproline 2-epimerase 1 (345 aa).

Substrate is bound at residue glutamine 85. Serine 93 functions as the Proton acceptor in the catalytic mechanism. Residues 94-95 (GS) and aspartate 251 each bind substrate. Cysteine 255 acts as the Proton donor in catalysis. 256 to 257 (GT) is a binding site for substrate.

The protein belongs to the proline racemase family.

The catalysed reaction is trans-4-hydroxy-L-proline = cis-4-hydroxy-D-proline. Functionally, catalyzes the epimerization of trans-4-hydroxy-L-proline (t4LHyp) to cis-4-hydroxy-D-proline (c4DHyp). May be involved in a degradation pathway of t4LHyp. Can also catalyze the epimerization of trans-3-hydroxy-L-proline (t3LHyp) to cis-3-hydroxy-D-proline (c3DHyp) in vitro. Displays no proline racemase activity. This is 4-hydroxyproline 2-epimerase 1 from Rhizobium rhizogenes (strain K84 / ATCC BAA-868) (Agrobacterium radiobacter).